The following is a 366-amino-acid chain: Ribosomal RNA large subunit methyltransferase M (366 aa).

S-adenosyl-L-methionine is bound by residues Ser188, 221 to 224, Asp240, Asp260, and Asp277; that span reads CPGG. The active-site Proton acceptor is Lys306.

Belongs to the class I-like SAM-binding methyltransferase superfamily. RNA methyltransferase RlmE family. RlmM subfamily. In terms of assembly, monomer.

The protein localises to the cytoplasm. It catalyses the reaction cytidine(2498) in 23S rRNA + S-adenosyl-L-methionine = 2'-O-methylcytidine(2498) in 23S rRNA + S-adenosyl-L-homocysteine + H(+). Functionally, catalyzes the 2'-O-methylation at nucleotide C2498 in 23S rRNA. In Photorhabdus sp. (strain Az29), this protein is Ribosomal RNA large subunit methyltransferase M.